A 383-amino-acid chain; its full sequence is ERCC4 domain-containing protein EP364R (383 aa).

Positions 3–101 constitute an ERCC4 domain; the sequence is FLVADHREHH…QLYFFVEGPA (99 aa). Positions 336 to 367 are disordered; that stretch reads LHKVSDEASENASHDASENASDKVSSPTGHQT. Positions 347-356 are enriched in basic and acidic residues; the sequence is ASHDASENAS. Residues 357 to 367 are compositionally biased toward polar residues; it reads DKVSSPTGHQT.

The protein belongs to the asfivirus EP364R family.

Functionally, plays a role in the inhibition of type I interferon signaling pathway. Mechanistically, specifically interacts with 2',3'-cGAMP and cleaves it via its phosphodiesterase activity. In turn, prevents 2',3'-cGAMP interaction with host ER-resident STING1 leading to inhibition of downstream signaling pathway and type I interferon production. This Ornithodoros (relapsing fever ticks) protein is ERCC4 domain-containing protein EP364R.